The following is a 92-amino-acid chain: Small ribosomal subunit protein uS19 (92 aa).

It belongs to the universal ribosomal protein uS19 family.

In terms of biological role, protein S19 forms a complex with S13 that binds strongly to the 16S ribosomal RNA. This is Small ribosomal subunit protein uS19 from Bacillus licheniformis (strain ATCC 14580 / DSM 13 / JCM 2505 / CCUG 7422 / NBRC 12200 / NCIMB 9375 / NCTC 10341 / NRRL NRS-1264 / Gibson 46).